Consider the following 357-residue polypeptide: Thiamine thiazole synthase 1, chloroplastic (357 aa).

A chloroplast-targeting transit peptide spans 1-51; that stretch reads MSISAAGVATGLGANVELKSNVGSSSSSVAGVRLFTSRKAQLRRCAAPATS. Substrate is bound by residues Ala-103, 123–124, Gly-131, and Ala-196; that span reads EQ. Cys-225 is subject to 2,3-didehydroalanine (Cys). Residues Asp-227, His-242, Met-294, and 304–306 contribute to the substrate site; that span reads RMG.

Belongs to the THI4 family. As to quaternary structure, homooctamer. The cofactor is Fe cation. During the catalytic reaction, a sulfide is transferred from Cys-225 to a reaction intermediate, generating a dehydroalanine residue.

The protein localises to the plastid. It is found in the chloroplast. It carries out the reaction [ADP-thiazole synthase]-L-cysteine + glycine + NAD(+) = [ADP-thiazole synthase]-dehydroalanine + ADP-5-ethyl-4-methylthiazole-2-carboxylate + nicotinamide + 3 H2O + 2 H(+). Its function is as follows. Involved in biosynthesis of the thiamine precursor thiazole. Catalyzes the conversion of NAD and glycine to adenosine diphosphate 5-(2-hydroxyethyl)-4-methylthiazole-2-carboxylic acid (ADT), an adenylated thiazole intermediate. The reaction includes an iron-dependent sulfide transfer from a conserved cysteine residue of the protein to a thiazole intermediate. The enzyme can only undergo a single turnover, which suggests it is a suicide enzyme. May have additional roles in adaptation to various stress conditions and in DNA damage tolerance. In Physcomitrium patens (Spreading-leaved earth moss), this protein is Thiamine thiazole synthase 1, chloroplastic.